Here is a 324-residue protein sequence, read N- to C-terminus: Homeobox protein engrailed-2 (324 aa).

Disordered regions lie at residues Met-1–Pro-59, Gly-89–Ala-174, and Asp-215–Thr-240. Positions Gly-89–Gly-110 are enriched in gly residues. The homeobox DNA-binding region spans Asp-235–Thr-294.

It belongs to the engrailed homeobox family. Cerebellar granule cells.

It is found in the nucleus. The polypeptide is Homeobox protein engrailed-2 (En2) (Mus musculus (Mouse)).